The primary structure comprises 708 residues: Exocyst complex component 5 (708 aa).

Position 2 is an N-acetylalanine (Ala-2). The stretch at 40–101 (KRLLEEFVNH…AFQHFQELDE (62 aa)) forms a coiled coil. 3 positions are modified to phosphothreonine: Thr-122, Thr-395, and Thr-405. Ser-412 carries the post-translational modification Phosphoserine.

It belongs to the SEC10 family. As to quaternary structure, the exocyst complex is composed of EXOC1, EXOC2, EXOC3, EXOC4, EXOC5, EXOC6, EXOC7 and EXOC8. Interacts with EXOC3L1. As to expression, ubiquitous.

The protein localises to the cytoplasm. The protein resides in the midbody. Functionally, component of the exocyst complex involved in the docking of exocytic vesicles with fusion sites on the plasma membrane. This chain is Exocyst complex component 5 (EXOC5), found in Homo sapiens (Human).